The following is a 292-amino-acid chain: MPWLQVRLAISPEQAETYEDALLEVGAVSVTFMDAEDQPIFEPDLNTTPLWSHTHLLALFEANADPEQVFAHLRLLTGAELPEHQAEVIEDQDWERSWMDNFQPMRFGRRLWIVPSWHDAPEKDAVNLLLDPGLAFGTGTHPTTALCLEWLDGQQLEGTQVLDFGCGSGILAIAALLLGAREAVGTDIDVQAIEASRDNAQRNGIADEKLALYLPEHMPAMQADVLVANILAGPLVSLAPQLSGLVRPGGLLALSGILAEQGEDVAAAYAADFELDPIVVRDGWVRISGRRR.

S-adenosyl-L-methionine contacts are provided by Thr-144, Gly-165, Asp-187, and Asn-229.

Belongs to the methyltransferase superfamily. PrmA family.

The protein resides in the cytoplasm. It carries out the reaction L-lysyl-[protein] + 3 S-adenosyl-L-methionine = N(6),N(6),N(6)-trimethyl-L-lysyl-[protein] + 3 S-adenosyl-L-homocysteine + 3 H(+). In terms of biological role, methylates ribosomal protein L11. The polypeptide is Ribosomal protein L11 methyltransferase (Pseudomonas putida (strain ATCC 47054 / DSM 6125 / CFBP 8728 / NCIMB 11950 / KT2440)).